The chain runs to 200 residues: NADH-quinone oxidoreductase subunit C (200 aa).

The protein belongs to the complex I 30 kDa subunit family. In terms of assembly, NDH-1 is composed of 14 different subunits. Subunits NuoB, C, D, E, F, and G constitute the peripheral sector of the complex.

It is found in the cell inner membrane. It catalyses the reaction a quinone + NADH + 5 H(+)(in) = a quinol + NAD(+) + 4 H(+)(out). Functionally, NDH-1 shuttles electrons from NADH, via FMN and iron-sulfur (Fe-S) centers, to quinones in the respiratory chain. The immediate electron acceptor for the enzyme in this species is believed to be ubiquinone. Couples the redox reaction to proton translocation (for every two electrons transferred, four hydrogen ions are translocated across the cytoplasmic membrane), and thus conserves the redox energy in a proton gradient. The polypeptide is NADH-quinone oxidoreductase subunit C (Maricaulis maris (strain MCS10) (Caulobacter maris)).